The sequence spans 153 residues: UPF0260 protein YcgN (153 aa).

Belongs to the UPF0260 family.

The sequence is that of UPF0260 protein YcgN from Shigella flexneri serotype 5b (strain 8401).